A 275-amino-acid polypeptide reads, in one-letter code: Rhamnulose-1-phosphate aldolase (275 aa).

Glu117 is an active-site residue. Zn(2+) is bound by residues His141, His143, and His212.

The protein belongs to the aldolase class II family. RhaD subfamily. Homotetramer. Zn(2+) serves as cofactor.

The protein resides in the cytoplasm. It carries out the reaction L-rhamnulose 1-phosphate = (S)-lactaldehyde + dihydroxyacetone phosphate. The protein operates within carbohydrate degradation; L-rhamnose degradation; glycerone phosphate from L-rhamnose: step 3/3. Functionally, catalyzes the reversible cleavage of L-rhamnulose-1-phosphate to dihydroxyacetone phosphate (DHAP) and L-lactaldehyde. This Citrobacter koseri (strain ATCC BAA-895 / CDC 4225-83 / SGSC4696) protein is Rhamnulose-1-phosphate aldolase.